The following is a 246-amino-acid chain: tRNA pseudouridine synthase B (246 aa).

The active-site Nucleophile is the Asp-44.

It belongs to the pseudouridine synthase TruB family. Type 1 subfamily.

The enzyme catalyses uridine(55) in tRNA = pseudouridine(55) in tRNA. Functionally, responsible for synthesis of pseudouridine from uracil-55 in the psi GC loop of transfer RNAs. The polypeptide is tRNA pseudouridine synthase B (Desulfotalea psychrophila (strain LSv54 / DSM 12343)).